A 782-amino-acid polypeptide reads, in one-letter code: Beta-mannosyltransferase 9 (782 aa).

Residues 1–26 (MEKLIQSTISLFISLSLKISTKSYKS) lie on the Cytoplasmic side of the membrane. Residues 27 to 47 (IISILFIISLLSIILTTTITV) traverse the membrane as a helical segment. Residues 48-782 (YHDPERIITT…GKDKGKDKSN (735 aa)) lie on the Extracellular side of the membrane. A disordered region spans residues 66 to 96 (KSVFTASSPKQQDKLQQEIDQHQSDNSHEQQ). Residues 76–96 (QQDKLQQEIDQHQSDNSHEQQ) are compositionally biased toward basic and acidic residues. N-linked (GlcNAc...) asparagine glycans are attached at residues N445, N648, and N699.

This sequence belongs to the BMT family.

It is found in the membrane. Beta-mannosyltransferase involved in cell wall biosynthesis through beta-1,2-mannosylation of cell wall phosphopeptidomannan. The sequence is that of Beta-mannosyltransferase 9 (BMT9) from Candida albicans (strain SC5314 / ATCC MYA-2876) (Yeast).